The sequence spans 938 residues: Glutamate receptor ionotropic, NMDA 1 (938 aa).

Residues 1 to 18 (MSTMHLLTFALLFSCSFA) form the signal peptide. Topologically, residues 19 to 559 (RAACDPKIVN…TLDSFMQPFQ (541 aa)) are extracellular. 10 N-linked (GlcNAc...) asparagine glycosylation sites follow: Asn61, Asn203, Asn239, Asn276, Asn300, Asn350, Asn368, Asn440, Asn471, and Asn491. Cysteines 79 and 308 form a disulfide. Disulfide bonds link Cys420-Cys454 and Cys436-Cys455. Glycine contacts are provided by Pro516, Thr518, and Arg523. A helical membrane pass occupies residues 560 to 580 (STLWLLVGLSVHVVAVMLYLL). Residues 581 to 602 (DRFSPFGRFKVNSEEEEEDALT) lie on the Cytoplasmic side of the membrane. An intramembrane region (discontinuously helical) is located at residues 603–624 (LSSAMWFSWGVLLNSGIGEGAP). The tract at residues 603–624 (LSSAMWFSWGVLLNSGIGEGAP) is pore-forming. Residues 625-630 (RSFSAR) lie on the Cytoplasmic side of the membrane. The helical transmembrane segment at 631 to 647 (ILGMVWAGFAMIIVASY) threads the bilayer. At 648-812 (TANLAAFLVL…NAPATLTFEN (165 aa)) the chain is on the extracellular side. N-linked (GlcNAc...) asparagine glycosylation is present at Asn674. The glycine site is built by Ser688 and Asp732. A disulfide bridge connects residues Cys744 and Cys798. N-linked (GlcNAc...) asparagine glycosylation occurs at Asn771. Residues 813–833 (MAGVFMLVAGGIVAGIFLIFI) traverse the membrane as a helical segment. Topologically, residues 834–938 (EIAYKRHKDA…LQLCSRHRES (105 aa)) are cytoplasmic. Residue Lys877 is modified to Phosphoserine. A phosphoserine; by PKC mark is found at Ser889, Ser890, Ser896, and Ser897. Positions 889 to 938 (SSFKRRRSSKDTSTGGGRGALQNQKDTVLPRRAIEREEGQLQLCSRHRES) are disordered. Lys898 carries the phosphoserine modification. Positions 916 to 927 (VLPRRAIEREEG) are enriched in basic and acidic residues.

The protein belongs to the glutamate-gated ion channel (TC 1.A.10.1) family. NR1/GRIN1 subfamily. As to quaternary structure, heterotetramer; the NMDAR subunits are modular and harbor tiered domains that function in concert to regulate opening and closing of the cation-selective ion channel pore. Forms heterotetrameric channels composed of two GluN1/zeta subunits (GRIN1), and two identical GluN2/epsilon subunits (GRIN2A, GRIN2B, GRIN2C or GRIN2D) or GluN3 subunits (GRIN3A or GRIN3B) (in vitro). Can also form heterotetrameric channels that contain at least two GluN1 subunits and at least two different GluN2 subunits (or a combination of one GluN2 and one GluN3 subunits) (in vitro). In vivo, the subunit composition may vary in function of the expression levels of the different subunits. Found in a complex with GRIN2A or GRIN2B, GRIN3A and PPP2CB. Found in a complex with GRIN2A or GRIN2B and GRIN3B;. Interacts with SNX27 (via PDZ domain); the interaction is required for recycling to the plasma membrane when endocytosed and prevent degradation in lysosomes. Interacts with DLG4 and MPDZ. Interacts with LRFN1 and LRFN2. Interacts with MYZAP. Found in a complex with DLG4 and PRR7. Found in a complex with GRIN2B and PRR7. Interacts with PRR7; the interaction is reduced following NMDA receptor activity. Post-translationally, NMDA is probably regulated by C-terminal phosphorylation of an isoform of NR1 by PKC. Dephosphorylated on Ser-897 probably by protein phosphatase 2A (PPP2CB). Its phosphorylated state is influenced by the formation of the NMDAR-PPP2CB complex and the NMDAR channel activity. In terms of tissue distribution, detected throughout the brain, in brain cortex, cerebellum, thalamus and olfactory bulb.

Its subcellular location is the cell membrane. The protein resides in the postsynaptic cell membrane. The protein localises to the synaptic cell membrane. It is found in the postsynaptic density membrane. The catalysed reaction is Ca(2+)(in) = Ca(2+)(out). The enzyme catalyses Na(+)(in) = Na(+)(out). It catalyses the reaction K(+)(in) = K(+)(out). Its activity is regulated as follows. NMDA glutamate receptor activity is potentiated by Zn2(+) in a dose-dependent fashion. The potentiating effect of Zn2(+) is at submicromolar concentrations and its inhibitory action is at high micromolar to millimolar concentrations. Excitatory glycine receptors are inhibited by D-serine at 100uM. Component of N-methyl-D-aspartate (NMDA) receptors (NMDARs) that function as heterotetrameric, ligand-gated cation channels with high calcium permeability and voltage-dependent block by Mg(2+). NMDARs participate in synaptic plasticity for learning and memory formation by contributing to the long-term potentiation (LTP). Channel activation requires binding of the neurotransmitter L-glutamate to the GluN2 subunit, glycine or D-serine binding to the GluN1 subunit, plus membrane depolarization to eliminate channel inhibition by Mg(2+). NMDARs mediate simultaneously the potasium efflux and the influx of calcium and sodium. Each GluN2 or GluN3 subunit confers differential attributes to channel properties, including activation, deactivation and desensitization kinetics, pH sensitivity, Ca2(+) permeability, and binding to allosteric modulators. Forms excitatory glycinergic receptor complexes with GluN3 alone which are activated by glycine binding to the GluN1 and GluN3 subunits. This chain is Glutamate receptor ionotropic, NMDA 1, found in Rattus norvegicus (Rat).